The following is a 316-amino-acid chain: Ribosomal protein L11 methyltransferase (316 aa).

Residues Thr-160, Gly-181, Asp-203, and Asn-246 each contribute to the S-adenosyl-L-methionine site.

It belongs to the methyltransferase superfamily. PrmA family.

The protein resides in the cytoplasm. It carries out the reaction L-lysyl-[protein] + 3 S-adenosyl-L-methionine = N(6),N(6),N(6)-trimethyl-L-lysyl-[protein] + 3 S-adenosyl-L-homocysteine + 3 H(+). Methylates ribosomal protein L11. The sequence is that of Ribosomal protein L11 methyltransferase from Heliobacterium modesticaldum (strain ATCC 51547 / Ice1).